The following is a 133-amino-acid chain: uncharacterized protein (133 aa).

The interval 82-133 is disordered; that stretch reads KIKSYSPSRSQKALNNPSKIRTKQTNNDTTIQQSNNTTSTNTKPSSNTNTQQ. A compositionally biased stretch (polar residues) spans 86-100; sequence YSPSRSQKALNNPSK. Over residues 105–133 the composition is skewed to low complexity; that stretch reads QTNNDTTIQQSNNTTSTNTKPSSNTNTQQ.

This is an uncharacterized protein from Acidianus convivator (ABV).